The primary structure comprises 349 residues: GMP reductase (349 aa).

108-131 is an NADP(+) binding site; the sequence is LDFFKIKKIFSLSSELKYICIDVA. K(+)-binding residues include Gly181 and Gly183. Residue Cys186 is the Thioimidate intermediate of the active site. 216–239 contributes to the NADP(+) binding site; the sequence is IISDGGCTVSGDIAKAFGGGADFV.

This sequence belongs to the IMPDH/GMPR family. GuaC type 1 subfamily. In terms of assembly, homotetramer.

The catalysed reaction is IMP + NH4(+) + NADP(+) = GMP + NADPH + 2 H(+). In terms of biological role, catalyzes the irreversible NADPH-dependent deamination of GMP to IMP. It functions in the conversion of nucleobase, nucleoside and nucleotide derivatives of G to A nucleotides, and in maintaining the intracellular balance of A and G nucleotides. In Buchnera aphidicola subsp. Schizaphis graminum (strain Sg), this protein is GMP reductase.